Here is a 232-residue protein sequence, read N- to C-terminus: Octanoyltransferase (232 aa).

In terms of domain architecture, BPL/LPL catalytic spans 32–219 (DTIYDTLILL…SFMVFNFSSC (188 aa)). Residues 77–84 (RGGDITYH), 140–142 (AIG), and 153–155 (GFA) contribute to the substrate site. The Acyl-thioester intermediate role is filled by C171.

Belongs to the LipB family.

The protein resides in the cytoplasm. The enzyme catalyses octanoyl-[ACP] + L-lysyl-[protein] = N(6)-octanoyl-L-lysyl-[protein] + holo-[ACP] + H(+). The protein operates within protein modification; protein lipoylation via endogenous pathway; protein N(6)-(lipoyl)lysine from octanoyl-[acyl-carrier-protein]: step 1/2. In terms of biological role, catalyzes the transfer of endogenously produced octanoic acid from octanoyl-acyl-carrier-protein onto the lipoyl domains of lipoate-dependent enzymes. Lipoyl-ACP can also act as a substrate although octanoyl-ACP is likely to be the physiological substrate. The sequence is that of Octanoyltransferase from Dictyoglomus thermophilum (strain ATCC 35947 / DSM 3960 / H-6-12).